Here is a 26-residue protein sequence, read N- to C-terminus: Stage V sporulation protein M (26 aa).

An important for localization region spans residues 3-9 (FYTIKLP).

Interacts with SpoIVA. May interact with the ATP-dependent protease FtsH.

Its subcellular location is the forespore outer membrane. Its function is as follows. Coordinates cortex and coat assembly during sporulation. Associates with the spore coat protein SpoIVA and with the outer forespore membrane, thereby serving as a membrane anchor that tethers SpoIVA and the entire spore coat to the forespore surface. May also serve as a competitive inhibitor of FtsH activity during sporulation. The protein is Stage V sporulation protein M of Bacillus subtilis (strain 168).